Consider the following 513-residue polypeptide: Histidine ammonia-lyase (513 aa).

Positions 144–146 (ASG) form a cross-link, 5-imidazolinone (Ala-Gly). S145 carries the post-translational modification 2,3-didehydroalanine (Ser).

The protein belongs to the PAL/histidase family. In terms of processing, contains an active site 4-methylidene-imidazol-5-one (MIO), which is formed autocatalytically by cyclization and dehydration of residues Ala-Ser-Gly.

The protein resides in the cytoplasm. It carries out the reaction L-histidine = trans-urocanate + NH4(+). The protein operates within amino-acid degradation; L-histidine degradation into L-glutamate; N-formimidoyl-L-glutamate from L-histidine: step 1/3. This Streptococcus gordonii (strain Challis / ATCC 35105 / BCRC 15272 / CH1 / DL1 / V288) protein is Histidine ammonia-lyase.